Reading from the N-terminus, the 1100-residue chain is Isoleucine--tRNA ligase (1100 aa).

A 'HIGH' region motif is present at residues 48–58 (PFATGLPHFGH). The short motif at 626 to 630 (KMSKS) is the 'KMSKS' region element. Residue Lys629 participates in ATP binding.

This sequence belongs to the class-I aminoacyl-tRNA synthetase family. IleS type 2 subfamily. Monomer. It depends on Zn(2+) as a cofactor.

Its subcellular location is the cytoplasm. The catalysed reaction is tRNA(Ile) + L-isoleucine + ATP = L-isoleucyl-tRNA(Ile) + AMP + diphosphate. In terms of biological role, catalyzes the attachment of isoleucine to tRNA(Ile). As IleRS can inadvertently accommodate and process structurally similar amino acids such as valine, to avoid such errors it has two additional distinct tRNA(Ile)-dependent editing activities. One activity is designated as 'pretransfer' editing and involves the hydrolysis of activated Val-AMP. The other activity is designated 'posttransfer' editing and involves deacylation of mischarged Val-tRNA(Ile). In Treponema denticola (strain ATCC 35405 / DSM 14222 / CIP 103919 / JCM 8153 / KCTC 15104), this protein is Isoleucine--tRNA ligase.